Consider the following 555-residue polypeptide: Urocanate hydratase (555 aa).

NAD(+) contacts are provided by residues 51 to 52 (GG), Q129, 175 to 177 (GMG), E195, 241 to 242 (NA), 262 to 266 (QTSAH), 272 to 273 (YL), and Y321. C409 is a catalytic residue. G491 contributes to the NAD(+) binding site.

This sequence belongs to the urocanase family. Requires NAD(+) as cofactor.

Its subcellular location is the cytoplasm. It catalyses the reaction 4-imidazolone-5-propanoate = trans-urocanate + H2O. The protein operates within amino-acid degradation; L-histidine degradation into L-glutamate; N-formimidoyl-L-glutamate from L-histidine: step 2/3. Its function is as follows. Catalyzes the conversion of urocanate to 4-imidazolone-5-propionate. This is Urocanate hydratase from Hyphomonas neptunium (strain ATCC 15444).